The chain runs to 873 residues: MAGVLFANLPCSLQLSPKVPFRQSTNILIPFHKRSSFGFNAQHCVRSHLRLRWNCVGIHASAAETRPDQLPQEERFVSRLNADYHPAVWKDDFIDSLTSPNSHATSKSSVDETINKRIQTLVKEIQCMFQSMGDGETNPSAYDTAWVARIPSIDGSGAPQFPQTLQWILNNQLPDGSWGEECIFLAYDRVLNTLACLLTLKIWNKGDIQVQKGVEFVRKHMEEMKDEADNHRPSGFEVVFPAMLDEAKSLGLDLPYHLPFISQIHQKRQKKLQKIPLNVLHNHQTALLYSLEGLQDVVDWQEITNLQSRDGSFLSSPASTACVFMHTQNKRCLHFLNFVLSKFGDYVPCHYPLDLFERLWAVDTVERLGIDRYFKKEIKESLDYVYRYWDAERGVGWARCNPIPDVDDTAMGLRILRLHGYNVSSDVLENFRDEKGDFFCFAGQTQIGVTDNLNLYRCSQVCFPGEKIMEEAKTFTTNHLQNALAKNNAFDKWAVKKDLPGEVEYAIKYPWHRSMPRLEARSYIEQFGSNDVWLGKTVYKMLYVSNEKYLELAKLDFNMVQALHQKETQHIVSWWRESGFNDLTFTRQRPVEMYFSVAVSMFEPEFAACRIAYAKTSCLAVILDDLYDTHGSLDDLKLFSEAVRRWDISVLDSVRDNQLKVCFLGLYNTVNGFGKDGLKEQGRDVLGYLRKVWEGLLASYTKEAEWSAAKYVPTFNEYVENAKVSIALATVVLNSIFFTGELLPDYILQQVDLRSKFLHLVSLTGRLINDTKTYQAERNRGELVSSVQCYMRENPECTEEEALSHVYGIIDNALKELNWELANPASNAPLCVRRLLFNTARVMQLFYMYRDGFGISDKEMKDHVSRTLFDPVA.

The N-terminal 59 residues, Met-1–His-59, are a transit peptide targeting the chloroplast. Lys-271 serves as a coordination point for substrate. The Mg(2+) site is built by Asp-405 and Asp-407. The DXDD motif signature appears at Asp-405 to Asp-408. Residue Lys-492 coordinates substrate. Asp-624, Asp-628, Asn-769, Thr-773, and Glu-777 together coordinate Mg(2+). The short motif at Asp-624–Asp-628 is the DDXXD motif element.

The protein belongs to the terpene synthase family. Tpsd subfamily. Requires Mg(2+) as cofactor. In terms of tissue distribution, expressed in roots.

It localises to the plastid. The protein localises to the chloroplast. The catalysed reaction is (2E,6E,10E)-geranylgeranyl diphosphate = (+)-copalyl diphosphate. It carries out the reaction (+)-copalyl diphosphate = abieta-8(14),12-diene + diphosphate. The protein operates within terpene metabolism; ginkgolide biosynthesis. Its function is as follows. Catalyzes the initial cyclization step in the biosynthesis of ginkgolides, a structurally unique family of diterpenoids that are highly specific platelet-activating-factor receptor antagonists. Bifunctional enzyme that catalyzes two sequential cyclizations of geranylgeranyl diphosphate (GGPP) to levopimaradiene. This Ginkgo biloba (Ginkgo) protein is Bifunctional levopimaradiene synthase, chloroplastic (LPS).